The following is a 250-amino-acid chain: NADH-quinone oxidoreductase subunit C (250 aa).

Residues 193–250 (GMTPPLPGDEKADMPPIDDPMVTEGPEDTGAGARANAKAAEGTPADPPAMDDEEEDDA) are disordered. Over residues 222–236 (GAGARANAKAAEGTP) the composition is skewed to low complexity. Over residues 241–250 (AMDDEEEDDA) the composition is skewed to acidic residues.

Belongs to the complex I 30 kDa subunit family. NDH-1 is composed of 14 different subunits. Subunits NuoB, C, D, E, F, and G constitute the peripheral sector of the complex.

It localises to the cell inner membrane. The enzyme catalyses a quinone + NADH + 5 H(+)(in) = a quinol + NAD(+) + 4 H(+)(out). NDH-1 shuttles electrons from NADH, via FMN and iron-sulfur (Fe-S) centers, to quinones in the respiratory chain. The immediate electron acceptor for the enzyme in this species is believed to be ubiquinone. Couples the redox reaction to proton translocation (for every two electrons transferred, four hydrogen ions are translocated across the cytoplasmic membrane), and thus conserves the redox energy in a proton gradient. The chain is NADH-quinone oxidoreductase subunit C from Erythrobacter litoralis (strain HTCC2594).